The chain runs to 411 residues: Phosphoglycerate kinase (411 aa).

Substrate-binding positions include 19 to 21 (DLN), R34, 57 to 60 (HQSR), R114, and R154. Residues E332 and 358–361 (GGHS) contribute to the ATP site.

It belongs to the phosphoglycerate kinase family. Monomer.

Its subcellular location is the cytoplasm. It catalyses the reaction (2R)-3-phosphoglycerate + ATP = (2R)-3-phospho-glyceroyl phosphate + ADP. It functions in the pathway carbohydrate degradation; glycolysis; pyruvate from D-glyceraldehyde 3-phosphate: step 2/5. The chain is Phosphoglycerate kinase from Thermococcus kodakarensis (strain ATCC BAA-918 / JCM 12380 / KOD1) (Pyrococcus kodakaraensis (strain KOD1)).